Reading from the N-terminus, the 755-residue chain is MTRPVTLSEPHFSQHTLNKYASLMAQGNGYLGLRASHEEDYTRQTRGMYLAGLYHRAGKGEINELVNLPDVVGMEIAINGEVFSLSHEAWQRELDFASGELRRNVVWRTSNGSGYTIASRRFVSADQLPLIALEITITPLDADASVLISTGIDATQTNHGRQHLDETQVRVFGQHLMQGSYTTQDGRSDVAISCCCKVSGDVQQCYTAKERRLLQHTSAQLHAGETMTLQKLVWIDWRDDRQAALDEWGSASLRQLEMCAQQSYDQLLAASTENWRQWWQKRRITVNGGEAHDQQALDYALYHLRIMTPAHDERSSIAAKGLTGEGYKGHVFWDTEVFLLPFHLFSDPTVARSLLRYRWHNLPGAQEKARRNGWQGALFPWESARSGEEETPEFAAINIRTGLRQKVASAQAEHHLVADIAWAVIQYWQTTGDESFIAHEGMALLLETAKFWISRAVRVNDRLEIHDVIGPDEYTEHVNNNAYTSYMARYNVQQALNIARQFGCSDDAFIHRAEMFLKELWMPEIQPDGVLPQDDSFMAKPAINLAKYKAAAGKQTILLDYSRAEVNEMQILKQADVVMLNYMLPEQFSAASCLANLQFYEPRTIHDSSLSKAIHGIVAARCGLLTQSYQFWREGTEIDLGADPHSCDDGIHAAATGAIWLGAIQGFAGVSVRDGELHLNPALPEQWQQLSFPLFWQGCELQVTLDAQRIAIRTSAPVSLRLNGQLITVAEESVFCLGDFILPFNGTATKHQEDE.

Trp-333–Asp-334 lines the substrate pocket. Glu-473 acts as the Proton donor in catalysis. Lys-573 to Gln-574 serves as a coordination point for substrate.

Belongs to the glycosyl hydrolase 65 family.

It carries out the reaction kojibiose + phosphate = beta-D-glucose 1-phosphate + D-glucose. Its function is as follows. In vitro catalyzes the phosphorolysis of D-kojibiose into beta-D-glucose 1-phosphate and D-glucose. No other disaccharides tested substitute for D-kojibiose. In the reverse direction disaccharides can be formed from beta-D-glucose 1-phosphate plus D-glucose, L-sorbose, D-sorbitol, L-iditol or 1,5-anhydro-D-glucitol, but with low efficiency. The beta-D-glucose 1-phosphate product is the substrate for YcjU (AC P77366), the next apparent enzyme in the putative biochemical pathway encoded in this locus (yjcM to ycjW). The chain is Kojibiose phosphorylase (ycjT) from Escherichia coli (strain K12).